The following is a 630-amino-acid chain: Transcription factor MYC1 (630 aa).

2 disordered regions span residues 356–398 and 430–463; these read FGDS…NNEE and VKEAVVEPEKKPRKRGRKPANGREEPLNHVEAER. Residues 440-449 are compositionally biased toward basic residues; sequence KPRKRGRKPA. Positions 450 to 463 are enriched in basic and acidic residues; the sequence is NGREEPLNHVEAER. Residues 453–466 form a basic motif; degenerate region; it reads EEPLNHVEAERQRR. One can recognise a bHLH domain in the interval 453-502; it reads EEPLNHVEAERQRREKLNQRFYALRAVVPNVSKMDKASLLGDAIAYINEL. Positions 467 to 502 are helix-loop-helix motif; it reads EKLNQRFYALRAVVPNVSKMDKASLLGDAIAYINEL.

Highly expressed in trichomes and at lower levels in leaves and flowers. Expressed at low levels in roots, stems, leaves, flowers and fruits.

It is found in the nucleus. Functionally, transcriptional activator that binds to the G-box motif (5'-AACGTG-3') found in a number of promoters of jasmonate-induced genes. Transcription activator involved in the transcriptional regulation of terpene biosynthesis in glandular trichomes. Binds to the promoter of the linalool synthase TPS5 and promotes TPS5 gene transactivation. Acts synergistically with EOT1 in the transactivation of TPS5. Involved in type VI glandular trichome development. Involved in the activation of terpene synthases required for volatile mono- and sesquiterpenes synthesis by the glandular cells of type VI trichomes. This Solanum lycopersicum (Tomato) protein is Transcription factor MYC1.